The following is a 280-amino-acid chain: Pantothenate synthetase (280 aa).

30 to 37 (MGYLHEGH) provides a ligand contact to ATP. Residue His-37 is the Proton donor of the active site. (R)-pantoate is bound at residue Gln-61. Gln-61 contributes to the beta-alanine binding site. 147–150 (GQKD) lines the ATP pocket. Residue Gln-153 coordinates (R)-pantoate. ATP is bound by residues Val-176 and 184-187 (MSSR).

The protein belongs to the pantothenate synthetase family. Homodimer.

Its subcellular location is the cytoplasm. The enzyme catalyses (R)-pantoate + beta-alanine + ATP = (R)-pantothenate + AMP + diphosphate + H(+). The protein operates within cofactor biosynthesis; (R)-pantothenate biosynthesis; (R)-pantothenate from (R)-pantoate and beta-alanine: step 1/1. In terms of biological role, catalyzes the condensation of pantoate with beta-alanine in an ATP-dependent reaction via a pantoyl-adenylate intermediate. This is Pantothenate synthetase from Thermotoga neapolitana.